The sequence spans 420 residues: UDP-N-acetylglucosamine 1-carboxyvinyltransferase (420 aa).

Residue 22 to 23 participates in phosphoenolpyruvate binding; sequence KN. Arg93 lines the UDP-N-acetyl-alpha-D-glucosamine pocket. The active-site Proton donor is Cys117. At Cys117 the chain carries 2-(S-cysteinyl)pyruvic acid O-phosphothioketal. Residues Asp307 and Val329 each coordinate UDP-N-acetyl-alpha-D-glucosamine.

The protein belongs to the EPSP synthase family. MurA subfamily.

It is found in the cytoplasm. The enzyme catalyses phosphoenolpyruvate + UDP-N-acetyl-alpha-D-glucosamine = UDP-N-acetyl-3-O-(1-carboxyvinyl)-alpha-D-glucosamine + phosphate. Its pathway is cell wall biogenesis; peptidoglycan biosynthesis. In terms of biological role, cell wall formation. Adds enolpyruvyl to UDP-N-acetylglucosamine. The chain is UDP-N-acetylglucosamine 1-carboxyvinyltransferase from Marinobacter nauticus (strain ATCC 700491 / DSM 11845 / VT8) (Marinobacter aquaeolei).